A 342-amino-acid polypeptide reads, in one-letter code: Palmitoyltransferase PFA4 (342 aa).

The Cytoplasmic segment spans residues 1–8; it reads MITFSNPW. Residues 9–29 form a helical membrane-spanning segment; sequence IGVIIPCIIIFTLSTFSAIYI. Residues 30 to 38 lie on the Lumenal side of the membrane; the sequence is LPHHVSNNE. Residues 39 to 59 form a helical membrane-spanning segment; that stretch reads LTLFICASAMVWISYIIAIIV. The Cytoplasmic segment spans residues 60-124; that stretch reads PPGSPPKNYT…GHRNMPHFMR (65 aa). A DHHC domain is found at 77-127; that stretch reads MYCLKCKAYKPERTHHSKALGVCVLKMDHHCPWTNNTVGHRNMPHFMRFLV. Cys-107 acts as the S-palmitoyl cysteine intermediate in catalysis. The helical transmembrane segment at 125–145 threads the bilayer; the sequence is FLVWVDMTVGYLFIRLCIRIM. Over 146 to 162 the chain is Lumenal; that stretch reads KLWRDKHLPSYLFDKTE. The chain crosses the membrane as a helical span at residues 163–183; sequence VILSIVFLPASFFVLFTVGIL. Over 184–342 the chain is Cytoplasmic; it reads TIRVFVNMCN…ADFGVEHTDI (159 aa).

Belongs to the DHHC palmitoyltransferase family. PFA4 subfamily.

It localises to the endoplasmic reticulum membrane. It catalyses the reaction L-cysteinyl-[protein] + hexadecanoyl-CoA = S-hexadecanoyl-L-cysteinyl-[protein] + CoA. In terms of biological role, mediates the reversible addition of palmitate to target proteins, thereby regulating their membrane association and biological function. This is Palmitoyltransferase PFA4 from Yarrowia lipolytica (strain CLIB 122 / E 150) (Yeast).